Here is an 893-residue protein sequence, read N- to C-terminus: Desmocollin-1 (893 aa).

The N-terminal stretch at 1–29 (MAVASAAPGSIFWKQLLFSLLVLILFCDA) is a signal peptide. Positions 30 to 132 (CQKISLQVPS…KDAVLRRTKR (103 aa)) are excised as a propeptide. Cadherin domains follow at residues 133-240 (RWAP…APYF), 241-352 (ENKL…APYF), 353-470 (TETS…GPEC), 471-574 (QPPV…DHPP), and 575-682 (QIKQ…LSRE). Residues 133–692 (RWAPIPCSLM…AALANVFLGK (560 aa)) lie on the Extracellular side of the membrane. Asn-163 is a glycosylation site (N-linked (GlcNAc...) asparagine). At Thr-383 the chain carries Phosphothreonine. Asn-398 and Asn-545 each carry an N-linked (GlcNAc...) asparagine glycan. The helical transmembrane segment at 693–715 (WAILAMVLGSVLLLCILFTCFCV) threads the bilayer. The Cytoplasmic portion of the chain corresponds to 716–893 (TVKKTVKKCF…RTLAKTCVKK (178 aa)).

In terms of assembly, binds to JUP/plakoglobin. Isoform 1A is phosphorylated on a serine but isoform 1B is not. In terms of tissue distribution, epidermis and weakly in tongue papillae.

The protein localises to the cell membrane. The protein resides in the cell junction. Its subcellular location is the desmosome. Its function is as follows. A component of desmosome cell-cell junctions which are required for positive regulation of cellular adhesion. Required for desmosome adhesion strength between the granular layers of the epidermis, as a result moderates epidermal proliferation and differentiation. Is therefore required to maintain postnatal epidermal barrier function and normal hair follicle morphology into adulthood. This is Desmocollin-1 (DSC1) from Bos taurus (Bovine).